The sequence spans 157 residues: Putative pre-16S rRNA nuclease (157 aa).

The protein belongs to the YqgF nuclease family.

The protein localises to the cytoplasm. In terms of biological role, could be a nuclease involved in processing of the 5'-end of pre-16S rRNA. The chain is Putative pre-16S rRNA nuclease from Anaplasma marginale (strain St. Maries).